A 488-amino-acid chain; its full sequence is NAD-reducing hydrogenase HoxS subunit beta (488 aa).

Ni(2+)-binding residues include C62, C65, C458, and C461.

Belongs to the [NiFe]/[NiFeSe] hydrogenase large subunit family. Tetramer of an alpha and a gamma subunits (flavin-containing dimer), and a delta and a nickel-containing beta subunits (hydrogenase dimer). It depends on FMN as a cofactor. Ni(2+) serves as cofactor.

The protein resides in the cytoplasm. It catalyses the reaction H2 + NAD(+) = NADH + H(+). The polypeptide is NAD-reducing hydrogenase HoxS subunit beta (hoxH) (Cupriavidus necator (strain ATCC 17699 / DSM 428 / KCTC 22496 / NCIMB 10442 / H16 / Stanier 337) (Ralstonia eutropha)).